A 226-amino-acid polypeptide reads, in one-letter code: DnaJ homolog subfamily C member 30, mitochondrial (226 aa).

The transit peptide at 1–38 (MAAMRWRWWQRLLPWRLLQARGFPQNSAPSLGLGARTY) directs the protein to the mitochondrion. One can recognise a J domain in the interval 49–114 (ALYDLLGVPS…TLRRKYDRGL (66 aa)). Residues 116 to 157 (SDEDLRGPGVRPSRTPAPDPGSPRTPPPTSRTHDGSRASPGA) are disordered. The segment covering 130–144 (TPAPDPGSPRTPPPT) has biased composition (pro residues). A helical transmembrane segment spans residues 208 to 225 (DTAAIFLIFSIFIIIGFY).

In terms of assembly, associates with the ATP synthase complex. Interacts with MT-ATP6; interaction is direct. Interacts with ATP5MC2; interaction is direct. As to expression, expressed in brain, heart, kidney, liver, lung, spleen, stomach and testis. Highly expressed in the brain. In the neocortex, expressed in most, if not all, glutamatergic excitatory projection neurons (pyramidal) and many interneurons, with the strongest signal noticeably in large pyramidal neurons of layer 3C. Also present in pyramidal neurons of layer 3C PNs of the superior temporal cortex, as well as in pyramidal neurons (Betz cells) of the layer 5B primary motor cortex (at protein level).

Its subcellular location is the mitochondrion inner membrane. Mitochondrial protein enriched in neurons that acts as a regulator of mitochondrial respiration. Associates with the ATP synthase complex and facilitates ATP synthesis. May be a chaperone protein involved in the turnover of the subunits of mitochondrial complex I N-module. It facilitates the degradation of N-module subunits damaged by oxidative stress, and contributes to complex I functional efficiency. The sequence is that of DnaJ homolog subfamily C member 30, mitochondrial from Homo sapiens (Human).